A 237-amino-acid chain; its full sequence is Large ribosomal subunit protein uL3 (237 aa).

Disordered stretches follow at residues 133 to 155 and 213 to 237; these read ASHGNSITHRSHGSTGQRQDPGK and PENAPKPAGLRAGAKAEAAATEGAE. Polar residues predominate over residues 135-150; it reads HGNSITHRSHGSTGQR. N5-methylglutamine is present on Q151. Over residues 220-237 the composition is skewed to low complexity; sequence AGLRAGAKAEAAATEGAE.

It belongs to the universal ribosomal protein uL3 family. Part of the 50S ribosomal subunit. Forms a cluster with proteins L14 and L19. In terms of processing, methylated by PrmB.

Functionally, one of the primary rRNA binding proteins, it binds directly near the 3'-end of the 23S rRNA, where it nucleates assembly of the 50S subunit. The chain is Large ribosomal subunit protein uL3 from Brucella suis biovar 1 (strain 1330).